We begin with the raw amino-acid sequence, 979 residues long: UPF0182 protein MRA_0066 (979 aa).

Transmembrane regions (helical) follow at residues 19-39 (LVTAGMGMLALLLFGPRLVDI), 63-83 (LAIVAAVALVVAGIVLAALLL), 114-134 (LFGWGIAVTLGVVCGLIASFD), 174-194 (WLFVAVVLAFLASLLTHYLFG), 211-231 (VQLAVFAGAVVLLKAVAYWLD), 260-280 (KLVLVAIAVLCAVSFFTAIFL), and 288-308 (MAAALLVLSAILVGGLWPLLM). The disordered stretch occupies residues 898 to 948 (GTGRVATARGGDAASAPPPGAGGPAPPQAVPPPRTTQPPAAPPRGPDVPPA). A compositionally biased stretch (pro residues) spans 913-946 (APPPGAGGPAPPQAVPPPRTTQPPAAPPRGPDVP).

The protein belongs to the UPF0182 family.

The protein resides in the cell membrane. This chain is UPF0182 protein MRA_0066, found in Mycobacterium tuberculosis (strain ATCC 25177 / H37Ra).